The following is a 104-amino-acid chain: uncharacterized protein (104 aa).

Residues 42-104 adopt a coiled-coil conformation; the sequence is ARDSFDQDFE…AREERHKLGR (63 aa).

This sequence belongs to the WXG100 family.

This is an uncharacterized protein from Bacillus subtilis (strain 168).